The following is a 213-amino-acid chain: Ras-related protein Rab-19 (213 aa).

GTP is bound by residues Ser-24, Val-26, Gly-27, Lys-28, Thr-29, Cys-30, Asp-42, and Thr-47. Thr-29 contributes to the Mg(2+) binding site. The Switch 1 motif lies at 37–52; sequence SGIFMDNQQNTIGVDF. Mg(2+) contacts are provided by Thr-47 and Asp-70. The Switch 2 signature appears at 72–87; that stretch reads AGQERFRTITQSYYRS. Residues Gly-73, Asn-128, Lys-129, Asp-131, Ser-159, Ala-160, and Lys-161 each contribute to the GTP site. 2 S-geranylgeranyl cysteine lipidation sites follow: Cys-211 and Cys-213. Cys-213 is subject to Cysteine methyl ester.

Belongs to the small GTPase superfamily. Rab family. It depends on Mg(2+) as a cofactor.

Its subcellular location is the cell membrane. The enzyme catalyses GTP + H2O = GDP + phosphate + H(+). Its activity is regulated as follows. Regulated by guanine nucleotide exchange factors (GEFs) which promote the exchange of bound GDP for free GTP. Regulated by GTPase activating proteins (GAPs) which increase the GTP hydrolysis activity. Inhibited by GDP dissociation inhibitors (GDIs). Its function is as follows. The small GTPases Rab are key regulators of intracellular membrane trafficking, from the formation of transport vesicles to their fusion with membranes. Rabs cycle between an inactive GDP-bound form and an active GTP-bound form that is able to recruit to membranes different set of downstream effectors directly responsible for vesicle formation, movement, tethering and fusion. This is Ras-related protein Rab-19 (rab19) from Xenopus laevis (African clawed frog).